The primary structure comprises 66 residues: Large ribosomal subunit protein bL35 (66 aa).

2 stretches are compositionally biased toward basic residues: residues 1 to 16 (MPKF…RFKK) and 23 to 45 (KRGH…RQLR). The disordered stretch occupies residues 1-66 (MPKFKTHRAS…RIRQMLSQMK (66 aa)).

Belongs to the bacterial ribosomal protein bL35 family.

This is Large ribosomal subunit protein bL35 from Lacticaseibacillus casei (strain BL23) (Lactobacillus casei).